A 353-amino-acid chain; its full sequence is Paraneoplastic antigen Ma1 homolog (353 aa).

The protein belongs to the PNMA family. Testis and brain specific.

It is found in the nucleus. It localises to the nucleolus. The polypeptide is Paraneoplastic antigen Ma1 homolog (Pnma1) (Rattus norvegicus (Rat)).